Here is a 317-residue protein sequence, read N- to C-terminus: MAPSFITIDANDMDVDFSTTKPVQAKRTLLLAPPSIATQEDKLRDLFSTFDRSTTDLQMLDRLSAGVVSLPATTYDLVLILTDTDGTRRSEALQLLTRNVYTTLVPAMKAGAKLQTQDSALNASDAMEAVLAGLVQSDNGFEKPNFEPSAAVPLKFGLKKKNKPTPTAVPSIPTGFAAPMGIDSPVTNHDRDEDDELINEDTLLSEEDLTRPIMPPPECQPKTGRRRRACKDCTCGLADKLEAEDKERRANADKELNVMKLDTGDLNELDFTVEGKTGSCGSCALGDAFRCDGCPYMGLPAFKPGQEVQILNDVAQL.

An N-terminal SAM-like domain region spans residues 22–152 (PVQAKRTLLL…KPNFEPSAAV (131 aa)). The linker stretch occupies residues 153–209 (PLKFGLKKKNKPTPTAVPSIPTGFAAPMGIDSPVTNHDRDEDDELINEDTLLSEEDL). Residues C219, C230, C233, and C235 each contribute to the [2Fe-2S] cluster site. Residues 219–235 (CQPKTGRRRRACKDCTC) form a fe-S binding site A region. [4Fe-4S] cluster is bound by residues C280, C283, C291, and C294. 2 short sequence motifs (cx2C motif) span residues 280-283 (CGSC) and 291-294 (CDGC). The tract at residues 280-294 (CGSCALGDAFRCDGC) is fe-S binding site B.

It belongs to the anamorsin family. In terms of assembly, monomer. Interacts with tah18. Interacts with mia40. [2Fe-2S] cluster serves as cofactor. It depends on [4Fe-4S] cluster as a cofactor.

It localises to the cytoplasm. The protein resides in the mitochondrion intermembrane space. Its function is as follows. Component of the cytosolic iron-sulfur (Fe-S) protein assembly (CIA) machinery required for the maturation of extramitochondrial Fe-S proteins. Part of an electron transfer chain functioning in an early step of cytosolic Fe-S biogenesis, facilitating the de novo assembly of a [4Fe-4S] cluster on the scaffold complex cfd1-nbp35. Electrons are transferred to dre2 from NADPH via the FAD- and FMN-containing protein tah18. Tah18-dre2 are also required for the assembly of the diferric tyrosyl radical cofactor of ribonucleotide reductase (RNR), probably by providing electrons for reduction during radical cofactor maturation in the catalytic small subunit rnr2. The sequence is that of Fe-S cluster assembly protein dre2 from Penicillium rubens (strain ATCC 28089 / DSM 1075 / NRRL 1951 / Wisconsin 54-1255) (Penicillium chrysogenum).